The primary structure comprises 1246 residues: Respiratory nitrate reductase 2 alpha chain (1246 aa).

Residues 43–107 (DKIVRSTHGV…SYSWYLYSAN (65 aa)) form the 4Fe-4S Mo/W bis-MGD-type domain. Positions 50, 54, 58, and 93 each coordinate [4Fe-4S] cluster. Asp223 contacts Mo-bis(molybdopterin guanine dinucleotide).

It belongs to the prokaryotic molybdopterin-containing oxidoreductase family. In terms of assembly, tetramer composed of an alpha, a beta and 2 gamma chains. Alpha and beta are catalytic chains; gamma chain is involved in binding the enzyme complex to the cytoplasmic membrane. Requires [4Fe-4S] cluster as cofactor. The cofactor is Mo-bis(molybdopterin guanine dinucleotide).

It is found in the cell membrane. It carries out the reaction nitrate + a quinol = a quinone + nitrite + H2O. Its function is as follows. This is a second nitrate reductase enzyme which can substitute for the NRA enzyme and allows E.coli to use nitrate as an electron acceptor during anaerobic growth. In terms of biological role, the alpha chain is the actual site of nitrate reduction. The polypeptide is Respiratory nitrate reductase 2 alpha chain (narZ) (Escherichia coli (strain K12)).